The primary structure comprises 26 residues: Mu-theraphotoxin-Phlo2a (26 aa).

Cystine bridges form between C2/C16, C9/C21, and C15/C25.

Belongs to the neurotoxin 30 (phrixotoxin) family. As to expression, expressed by the venom gland.

The protein resides in the secreted. Its function is as follows. Gating-modifier toxin that non-selectively inhibits voltage-gated sodium channel Nav by shifting the threshold for channel activation to more positive potentials. This toxin moderately inhibits human Nav1.2/SCN2A (IC(50)=404 nM), Nav1.5/SCN5A (IC(50)=218 nM) and Nav1.7/SCN9A (IC(50)=333 nM). Inhibition of Nav1.7 is voltage-dependent, with lower inhibition at more positive test pulses. In Phlogius sp. (Tarantula spider), this protein is Mu-theraphotoxin-Phlo2a.